We begin with the raw amino-acid sequence, 494 residues long: Glutamyl-tRNA(Gln) amidotransferase subunit A (494 aa).

Residues Lys88 and Ser163 each act as charge relay system in the active site. Ser187 functions as the Acyl-ester intermediate in the catalytic mechanism.

Belongs to the amidase family. GatA subfamily. In terms of assembly, heterotrimer of A, B and C subunits.

The catalysed reaction is L-glutamyl-tRNA(Gln) + L-glutamine + ATP + H2O = L-glutaminyl-tRNA(Gln) + L-glutamate + ADP + phosphate + H(+). In terms of biological role, allows the formation of correctly charged Gln-tRNA(Gln) through the transamidation of misacylated Glu-tRNA(Gln) in organisms which lack glutaminyl-tRNA synthetase. The reaction takes place in the presence of glutamine and ATP through an activated gamma-phospho-Glu-tRNA(Gln). The protein is Glutamyl-tRNA(Gln) amidotransferase subunit A of Corynebacterium diphtheriae (strain ATCC 700971 / NCTC 13129 / Biotype gravis).